The primary structure comprises 206 residues: LysM and putative peptidoglycan-binding domain-containing protein 2 (206 aa).

In terms of domain architecture, LysM spans 59–103 (IEHCLSPSDTLQGIALKYGVTMEQIKRANKLFSTDCIFLRKSLNI). Residues 184 to 206 (AQRLKEEDDLRHDGSYATCSYQH) are disordered. Basic and acidic residues predominate over residues 186–197 (RLKEEDDLRHDG).

In Xenopus laevis (African clawed frog), this protein is LysM and putative peptidoglycan-binding domain-containing protein 2 (lysmd2).